The chain runs to 296 residues: Acetylglutamate kinase (296 aa).

Substrate contacts are provided by residues 65–66 (GG), Arg-87, and Asn-190.

Belongs to the acetylglutamate kinase family. ArgB subfamily.

It localises to the cytoplasm. The enzyme catalyses N-acetyl-L-glutamate + ATP = N-acetyl-L-glutamyl 5-phosphate + ADP. The protein operates within amino-acid biosynthesis; L-arginine biosynthesis; N(2)-acetyl-L-ornithine from L-glutamate: step 2/4. Catalyzes the ATP-dependent phosphorylation of N-acetyl-L-glutamate. This Moorella thermoacetica (strain ATCC 39073 / JCM 9320) protein is Acetylglutamate kinase.